Reading from the N-terminus, the 124-residue chain is Large ribosomal subunit protein eL22y (124 aa).

Belongs to the eukaryotic ribosomal protein eL22 family.

The sequence is that of Large ribosomal subunit protein eL22y (RPL22C) from Arabidopsis thaliana (Mouse-ear cress).